A 190-amino-acid chain; its full sequence is Protein GrpE (190 aa).

Disordered regions lie at residues 1 to 22 and 170 to 190; these read MAEE…GQTI and EEGE…KPQS. Basic residues predominate over residues 181–190; sequence ARVKVGKPQS.

It belongs to the GrpE family. As to quaternary structure, homodimer.

It is found in the cytoplasm. Participates actively in the response to hyperosmotic and heat shock by preventing the aggregation of stress-denatured proteins, in association with DnaK and GrpE. It is the nucleotide exchange factor for DnaK and may function as a thermosensor. Unfolded proteins bind initially to DnaJ; upon interaction with the DnaJ-bound protein, DnaK hydrolyzes its bound ATP, resulting in the formation of a stable complex. GrpE releases ADP from DnaK; ATP binding to DnaK triggers the release of the substrate protein, thus completing the reaction cycle. Several rounds of ATP-dependent interactions between DnaJ, DnaK and GrpE are required for fully efficient folding. This Leptospira biflexa serovar Patoc (strain Patoc 1 / Ames) protein is Protein GrpE.